A 299-amino-acid chain; its full sequence is MKEIVEQNIFNEDLSQLLYSFIDSKETFSFAESTILHYVVFGGENLDVATRLGAGIEILILSSDIMDDLEDEDNHHALWMKINRSESLNAALSLYTVGLTSIYSLNNNPLIFKYVLKYVNEAMQGQHDDITNKSKTEDESLEVIRLKCGSLIALANVAGVLLATGEYNETVERYSYYKGIIAQISGDYYVLLSGNRSDIEKNKHTLIYLYLKRLFNDASEDLLYLISHKDLYYKSLLDKEKFQEKLIKAGVTQYISVLLEIYKQKCISAIEQLNLDKEKKELIKECLLSYTKGDTRCKT.

Mg(2+) contacts are provided by Asp-67 and Asp-71.

This sequence belongs to the FPP/GGPP synthase family. Mg(2+) serves as cofactor.

Its subcellular location is the cell membrane. It carries out the reaction L-tryptophyl-[protein] + (2E,6E)-farnesyl diphosphate = (2S,3R)-3-farnesyl-2,3-dihydro-2,N(alpha)-cyclo-L-tryptophyl-[protein] + diphosphate. Its function is as follows. Part of a major quorum-sensing system that regulates the development of genetic competence. Involved in the maturation of the competence pheromone ComX. Acts by catalyzing the transfer of a farnesyl group on the ComX pheromone. Shows weak geranylation activity with geranyl diphosphate (GPP). The chain is Tryptophan prenyltransferase ComQ from Bacillus subtilis (strain 168).